Reading from the N-terminus, the 225-residue chain is Phosphoribosylformylglycinamidine synthase subunit PurQ (225 aa).

The Glutamine amidotransferase type-1 domain occupies 6–225 (FGVVVFPGSN…WQSILRSFAA (220 aa)). Cys89 functions as the Nucleophile in the catalytic mechanism. Catalysis depends on residues His198 and Glu200.

As to quaternary structure, part of the FGAM synthase complex composed of 1 PurL, 1 PurQ and 2 PurS subunits.

The protein resides in the cytoplasm. It catalyses the reaction N(2)-formyl-N(1)-(5-phospho-beta-D-ribosyl)glycinamide + L-glutamine + ATP + H2O = 2-formamido-N(1)-(5-O-phospho-beta-D-ribosyl)acetamidine + L-glutamate + ADP + phosphate + H(+). The enzyme catalyses L-glutamine + H2O = L-glutamate + NH4(+). Its pathway is purine metabolism; IMP biosynthesis via de novo pathway; 5-amino-1-(5-phospho-D-ribosyl)imidazole from N(2)-formyl-N(1)-(5-phospho-D-ribosyl)glycinamide: step 1/2. Part of the phosphoribosylformylglycinamidine synthase complex involved in the purines biosynthetic pathway. Catalyzes the ATP-dependent conversion of formylglycinamide ribonucleotide (FGAR) and glutamine to yield formylglycinamidine ribonucleotide (FGAM) and glutamate. The FGAM synthase complex is composed of three subunits. PurQ produces an ammonia molecule by converting glutamine to glutamate. PurL transfers the ammonia molecule to FGAR to form FGAM in an ATP-dependent manner. PurS interacts with PurQ and PurL and is thought to assist in the transfer of the ammonia molecule from PurQ to PurL. This Synechococcus sp. (strain JA-2-3B'a(2-13)) (Cyanobacteria bacterium Yellowstone B-Prime) protein is Phosphoribosylformylglycinamidine synthase subunit PurQ.